Here is a 429-residue protein sequence, read N- to C-terminus: Ribosomal RNA small subunit methyltransferase B (429 aa).

S-adenosyl-L-methionine-binding positions include 254–260, Asp277, Asp303, and Asp322; that span reads CAAPGGK. Cys375 (nucleophile) is an active-site residue.

Belongs to the class I-like SAM-binding methyltransferase superfamily. RsmB/NOP family.

The protein localises to the cytoplasm. The enzyme catalyses cytidine(967) in 16S rRNA + S-adenosyl-L-methionine = 5-methylcytidine(967) in 16S rRNA + S-adenosyl-L-homocysteine + H(+). Functionally, specifically methylates the cytosine at position 967 (m5C967) of 16S rRNA. The chain is Ribosomal RNA small subunit methyltransferase B from Escherichia coli (strain SMS-3-5 / SECEC).